The chain runs to 977 residues: Vacuolar membrane protease (977 aa).

Residues 1 to 17 (MARSRTAGRCNPFAFYR) are Cytoplasmic-facing. Residues 18 to 38 (VPVTVFVTLIYVALLAPIIVV) traverse the membrane as a helical segment. At 39–383 (HHILPAVPES…AFAVFEIHTL (345 aa)) the chain is on the vacuolar side. Residues Asn-113 and Asn-116 are each glycosylated (N-linked (GlcNAc...) asparagine). Zn(2+)-binding residues include His-166 and Asp-178. The active-site Proton acceptor is Glu-212. Residues Glu-213, Glu-238, and His-311 each coordinate Zn(2+). The chain crosses the membrane as a helical span at residues 384–404 (FALSVTLLIVGPLTLFITSII). The Cytoplasmic segment spans residues 405–438 (LANQDRMYLFGISVPVDDGFGSVPLRGWRGFFRF). The helical transmembrane segment at 439–459 (PFIFGSTTASVVALAYLMAKI) threads the bilayer. At 460 to 469 (NPMIAHSSEY) the chain is on the vacuolar side. Residues 470–490 (AVWSMMISAWVFVAWFLSRIA) traverse the membrane as a helical segment. Over 491–500 (NFARPSALHR) the chain is Cytoplasmic. The helical transmembrane segment at 501–521 (IYVLTWMFLLTWVLLVITTVY) threads the bilayer. The Vacuolar segment spans residues 522-525 (ENRD). The chain crosses the membrane as a helical span at residues 526 to 546 (GIASGYFVIFYAFGTFMATWI). Over 547-659 (SYLELFSLPK…WSANLPKWTW (113 aa)) the chain is Cytoplasmic. A compositionally biased stretch (polar residues) spans 566–576 (GQISSRPTSLG). A disordered region spans residues 566–604 (GQISSRPTSLGGSRLLTPSGESVGQHPEDEEPTESTSLL). A helical membrane pass occupies residues 660–680 (ILQFLLIAPIVIILIGQLGLL). Topologically, residues 681–696 (ITSAIHQTMQDGSSTL) are vacuolar. A helical transmembrane segment spans residues 697 to 717 (VPYLIIALLTTFLFMPTLPFI). Topologically, residues 718 to 726 (HRYTYHIPT) are cytoplasmic. Residues 727-747 (FLFLIFVATLVYNLVAFPFSG) form a helical membrane-spanning segment. The Vacuolar portion of the chain corresponds to 748-977 (NNRTKLFFLQ…LVKGSRSFEV (230 aa)). Asn-749 and Asn-791 each carry an N-linked (GlcNAc...) asparagine glycan.

This sequence belongs to the peptidase M28 family. It depends on Zn(2+) as a cofactor.

The protein resides in the vacuole membrane. In terms of biological role, may be involved in vacuolar sorting and osmoregulation. The protein is Vacuolar membrane protease of Talaromyces marneffei (strain ATCC 18224 / CBS 334.59 / QM 7333) (Penicillium marneffei).